The sequence spans 187 residues: NADH-quinone oxidoreductase subunit C 2 (187 aa).

Positions 153-187 (YKDKLNPFGAEGPPPTQPDLATRDIPQGRPSTPES) are disordered.

This sequence belongs to the complex I 30 kDa subunit family. NDH-1 is composed of 14 different subunits. Subunits NuoB, C, D, E, F, and G constitute the peripheral sector of the complex.

The protein resides in the cell inner membrane. The catalysed reaction is a quinone + NADH + 5 H(+)(in) = a quinol + NAD(+) + 4 H(+)(out). Its function is as follows. NDH-1 shuttles electrons from NADH, via FMN and iron-sulfur (Fe-S) centers, to quinones in the respiratory chain. The immediate electron acceptor for the enzyme in this species is believed to be ubiquinone. Couples the redox reaction to proton translocation (for every two electrons transferred, four hydrogen ions are translocated across the cytoplasmic membrane), and thus conserves the redox energy in a proton gradient. The chain is NADH-quinone oxidoreductase subunit C 2 from Rhizobium etli (strain CIAT 652).